A 388-amino-acid polypeptide reads, in one-letter code: Succinate--CoA ligase [ADP-forming] subunit beta (388 aa).

Residues 9-244 (KDLLSSYDIA…PSQENVRDVL (236 aa)) enclose the ATP-grasp domain. ATP is bound by residues Lys46, 53 to 55 (GRG), Val102, and Glu107. Positions 199 and 213 each coordinate Mg(2+). Residues Asn264 and 321–323 (GIM) each bind substrate.

This sequence belongs to the succinate/malate CoA ligase beta subunit family. In terms of assembly, heterotetramer of two alpha and two beta subunits. Mg(2+) is required as a cofactor.

It catalyses the reaction succinate + ATP + CoA = succinyl-CoA + ADP + phosphate. The enzyme catalyses GTP + succinate + CoA = succinyl-CoA + GDP + phosphate. It participates in carbohydrate metabolism; tricarboxylic acid cycle; succinate from succinyl-CoA (ligase route): step 1/1. Succinyl-CoA synthetase functions in the citric acid cycle (TCA), coupling the hydrolysis of succinyl-CoA to the synthesis of either ATP or GTP and thus represents the only step of substrate-level phosphorylation in the TCA. The beta subunit provides nucleotide specificity of the enzyme and binds the substrate succinate, while the binding sites for coenzyme A and phosphate are found in the alpha subunit. In Chlamydia felis (strain Fe/C-56) (Chlamydophila felis), this protein is Succinate--CoA ligase [ADP-forming] subunit beta.